A 396-amino-acid chain; its full sequence is Inhibitory POU protein (396 aa).

The POU-IV box motif lies at 86-95 (RAEALAAVDI). The POU-specific domain maps to 222-299 (DTDTDPRELE…ILQAWLEEAE (78 aa)). A disordered region spans residues 302–328 (AKNKRRDPDAPSVLPAGEKKRKRTSIA). Positions 320–377 (KKRKRTSIAAPEKRSLEAYFAVQPRPSGEKIAAIAEKLDLKKNVVRVWFCNQRQKQKR) form a DNA-binding region, homeobox; atypical.

It belongs to the POU transcription factor family. Class-4 subfamily. In terms of tissue distribution, coexpressed with vvl in overlapping subsets of neurons in the embryonic central nervous system. Expressed in olfactory neurons.

Its subcellular location is the nucleus. Functionally, modulates gene transcription; simultaneously generates both a specific activator and an inhibitor of gene transcription, capable of modulating two distinct regulatory programs during neural development. Has a role in olfactory behavior. This is Inhibitory POU protein (acj6) from Drosophila melanogaster (Fruit fly).